Consider the following 694-residue polypeptide: PTS system fructose-specific EIIABC component (694 aa).

The PTS EIIA type-2 domain occupies 4–149; it reads PLLSAELFFN…NGLINLIDSF (146 aa). Residue His-68 is the Tele-phosphohistidine intermediate; for EIIA activity of the active site. The residue at position 68 (His-68) is a Phosphohistidine; by HPr. The 97-residue stretch at 179 to 275 folds into the PTS EIIB type-2 domain; it reads FVAVTACPTG…PQTVYDQVVK (97 aa). Cys-185 functions as the Phosphocysteine intermediate; for EIIB activity in the catalytic mechanism. The residue at position 185 (Cys-185) is a Phosphocysteine; by EIIA. Positions 310 to 687 constitute a PTS EIIC type-2 domain; it reads IYRAILSGVS…NLLVVRKKTK (378 aa). The next 10 helical transmembrane spans lie at 318–338, 364–384, 390–410, 422–442, 461–481, 502–522, 542–562, 576–596, 602–622, and 655–675; these read VSYMLPFVVFGGILIAIAFLI, GGLSFGLIVPILSAYIAFALV, LPGFIVGLISAGKFLLNIDIV, VSSGFFGAIFGGLLAAVLIIV, ILFIPLLGTLVTAALFWVINI, LAPLLGLVIGLMMCFDLGGPV, VAMASAILSGMVPPLGIAIAA, AAYACYVMGLSFISEGAIPFV, IMLAANLIGGAVCGVLTGAFA, and GVGLALLALIVSSFISAGIII.

The protein resides in the cell membrane. It catalyses the reaction D-fructose(out) + N(pros)-phospho-L-histidyl-[protein] = D-fructose 1-phosphate(in) + L-histidyl-[protein]. Functionally, the phosphoenolpyruvate-dependent sugar phosphotransferase system (sugar PTS), a major carbohydrate active transport system, catalyzes the phosphorylation of incoming sugar substrates concomitantly with their translocation across the cell membrane. This system is involved in fructose transport. This Mycoplasma pneumoniae (strain ATCC 29342 / M129 / Subtype 1) (Mycoplasmoides pneumoniae) protein is PTS system fructose-specific EIIABC component.